Here is a 519-residue protein sequence, read N- to C-terminus: Protein nucleotidyltransferase YdiU (519 aa).

The ATP site is built by Gly100, Gly102, Arg103, Lys123, Asp135, Gly136, Arg193, and Arg200. The active-site Proton acceptor is the Asp270. Asn271 and Asp280 together coordinate Mg(2+). An ATP-binding site is contributed by Asp280.

This sequence belongs to the SELO family. The cofactor is Mg(2+). It depends on Mn(2+) as a cofactor.

The catalysed reaction is L-seryl-[protein] + ATP = 3-O-(5'-adenylyl)-L-seryl-[protein] + diphosphate. It carries out the reaction L-threonyl-[protein] + ATP = 3-O-(5'-adenylyl)-L-threonyl-[protein] + diphosphate. It catalyses the reaction L-tyrosyl-[protein] + ATP = O-(5'-adenylyl)-L-tyrosyl-[protein] + diphosphate. The enzyme catalyses L-histidyl-[protein] + UTP = N(tele)-(5'-uridylyl)-L-histidyl-[protein] + diphosphate. The catalysed reaction is L-seryl-[protein] + UTP = O-(5'-uridylyl)-L-seryl-[protein] + diphosphate. It carries out the reaction L-tyrosyl-[protein] + UTP = O-(5'-uridylyl)-L-tyrosyl-[protein] + diphosphate. In terms of biological role, nucleotidyltransferase involved in the post-translational modification of proteins. It can catalyze the addition of adenosine monophosphate (AMP) or uridine monophosphate (UMP) to a protein, resulting in modifications known as AMPylation and UMPylation. The protein is Protein nucleotidyltransferase YdiU of Xylella fastidiosa (strain 9a5c).